A 379-amino-acid chain; its full sequence is Tubby-like F-box protein 7 (379 aa).

Residues 18–28 are compositionally biased toward polar residues; that stretch reads FHQGETTTAPE. Positions 18-41 are disordered; sequence FHQGETTTAPESESIPPPSNMAGS. The 56-residue stretch at 42–97 folds into the F-box domain; sequence SSWSAMLPELLGEIIRRVEETEDRWPQRRDVVTCACVSKKWREITHDFARSSLNSG. Disordered stretches follow at residues 193-212 and 248-278; these read SQPP…RRFA and TLRC…IMKK.

It belongs to the TUB family. Ubiquitous.

This is Tubby-like F-box protein 7 from Arabidopsis thaliana (Mouse-ear cress).